The sequence spans 300 residues: MEEEASSPGLGCSKPHLEKLTLGITRILESSPGVTEVTIIEKPPAERHMISSWEQKNNCVMPEDVKNFYLMTNGFHMTWSVKLDEHIIPLGSMAINSISKLTQLTQSSMYSLPNAPTLADLEDDTHEASDDQPEKPHFDSRSVIFELDSCNGSGKVCLVYKSGKPALAEDTEIWFLDRALYWHFLTDTFTAYYRLLITHLGLPQWQYAFTSYGISPQAKQWFSMYKPITYNTNLLTEETDSFVNKLDPSKVFKSKNKIVIPKKKGPVQPAGGQKGPSGPSGPSTSSTSKSSSGSGNPTRK.

The interval 257-300 (KIVIPKKKGPVQPAGGQKGPSGPSGPSTSSTSKSSSGSGNPTRK) is disordered. Residues 276–300 (PSGPSGPSTSSTSKSSSGSGNPTRK) show a composition bias toward low complexity.

Part of the neuronal tubulin polyglutamylase complex which contains TPGS1, TPGS2, TTLL1, LRRC49 and NICN1. Interacts with CSTPP1 and LRRC49.

Its subcellular location is the cytoplasm. The protein resides in the cytoskeleton. The protein localises to the microtubule organizing center. It localises to the centrosome. It is found in the centriolar satellite. Subunit of the tubulin polyglutamylase complex (TPGC). The complex mediates cilia and flagella polyglutamylation which is essential for their biogenesis and motility. This is Tubulin polyglutamylase complex subunit 2 (TPGS2) from Homo sapiens (Human).